Here is a 254-residue protein sequence, read N- to C-terminus: 21S rRNA pseudouridine(2819) synthase (254 aa).

Residue D71 is part of the active site.

This sequence belongs to the pseudouridine synthase RluA family.

The protein resides in the mitochondrion. It catalyses the reaction uridine(2819) in 21S rRNA = pseudouridine(2819) in 21S rRNA. Its function is as follows. Pseudouridylate synthase responsible for the pseudouridine-2819 formation in mitochondrial 21S rRNA. May modulate the efficiency or the fidelity of the mitochondrial translation machinery. This chain is 21S rRNA pseudouridine(2819) synthase (PUS5), found in Saccharomyces cerevisiae (strain ATCC 204508 / S288c) (Baker's yeast).